Here is a 570-residue protein sequence, read N- to C-terminus: Sorting nexin-41 (570 aa).

Disordered stretches follow at residues 1 to 31 (MSDF…PSAS) and 81 to 115 (FDDG…TTAS). Positions 84–101 (GSNSFSATPTASITNQND) are enriched in polar residues. One can recognise a PX domain in the interval 98–236 (NQNDTAHEAT…RFLDPHASWS (139 aa)). R153, S155, K179, and R202 together coordinate a 1,2-diacyl-sn-glycero-3-phospho-(1D-myo-inositol-3-phosphate). The tract at residues 429–498 (DSQRINDALG…ASRRQGIGKT (70 aa)) is disordered. A compositionally biased stretch (polar residues) spans 440 to 454 (TRSNNGPSTTNSGEQ). The span at 455–464 (PSASPAPKKS) shows a compositional bias: low complexity.

The protein belongs to the sorting nexin family.

It is found in the endosome membrane. The protein localises to the endomembrane system. Its function is as follows. May be required for cytoplasm to vacuole transport (Cvt) and pexophagy. This is Sorting nexin-41 (SNX41) from Yarrowia lipolytica (strain CLIB 122 / E 150) (Yeast).